The chain runs to 917 residues: Auxin response factor 17 (917 aa).

The TF-B3 DNA-binding region spans 134 to 236; it reads FCKTLTASDT…QLLLGIRRAN (103 aa). Residues 571-649 form a disordered region; the sequence is SVPNALSPFS…RPTAVPVPDP (79 aa). Low complexity-rich tracts occupy residues 576–594 and 604–620; these read LSPFSQLSSPSQSSPMTLQ and SYPDTSMSSLSPSNTST. The region spanning 786–870 is the PB1 domain; that stretch reads ATFVKVYKSG…SCIKILSPQE (85 aa).

The protein belongs to the ARF family. Homodimers and heterodimers.

The protein localises to the nucleus. Functionally, auxin response factors (ARFs) are transcriptional factors that bind specifically to the DNA sequence 5'-TGTCTC-3' found in the auxin-responsive promoter elements (AuxREs). This chain is Auxin response factor 17 (ARF17), found in Oryza sativa subsp. indica (Rice).